Reading from the N-terminus, the 78-residue chain is Calcium/calmodulin-dependent protein kinase II inhibitor 1 (78 aa).

The interval 41-68 (SKRPPKLGQIGRSKRVVIEDDRIDDVLK) is CAMK2 inhibitory domain.

This sequence belongs to the CAMK2N family. Interacts with CAMK2B; the presence of Ca(2+)/calmodulin increases the interaction but is not essential. Interacts with CAMK2A; this interaction requires CAMK2A activation by Ca(2+). Expressed in the brain (at protein level). Expressed in cardiomyocytes but not cardiac fibroblasts (at protein level).

The protein resides in the synapse. It is found in the cell projection. The protein localises to the dendrite. It localises to the postsynaptic density. Potent and specific inhibitor of CaM-kinase II (CAMK2). Plays a role in the maintenance of long-term retrieval-induced memory in response to contextual fear. Modulates blood pressure and vascular reactivity via regulation of CAMK2 activity in addition to regulation of left ventricular mass. Mediates the NLRP3 inflammasome in cardiomyocytes via acting as an inhibitor of the MAPK14/p38 and MAPK8/JNK pathways, thereby regulating ventricular remodeling and cardiac rhythm post-myocardial infarction. Negatively effects insulin sensitivity and promotes lipid formation in adipose tissues independent of CAMK2 signaling. This is Calcium/calmodulin-dependent protein kinase II inhibitor 1 (Camk2n1) from Mus musculus (Mouse).